The primary structure comprises 376 residues: Multiphosphoryl transfer protein (376 aa).

In terms of domain architecture, PTS EIIA type-2 spans Phe-2–Glu-142. His-62 functions as the Tele-phosphohistidine intermediate; for EIIA activity in the catalytic mechanism. His-62 carries the phosphohistidine; by HPr modification. Residues Thr-156 to Asp-284 form a m domain region. An HPr domain is found at Val-285–Gly-375. Residue His-299 is the Pros-phosphohistidine intermediate; for HPr activity of the active site. The residue at position 299 (His-299) is a Phosphohistidine; by EI.

The protein localises to the cytoplasm. Functionally, the phosphoenolpyruvate-dependent sugar phosphotransferase system (sugar PTS), a major carbohydrate active transport system, catalyzes the phosphorylation of incoming sugar substrates concomitantly with their translocation across the cell membrane. The enzyme II FruAB PTS system is involved in fructose transport. This Escherichia coli O157:H7 protein is Multiphosphoryl transfer protein.